We begin with the raw amino-acid sequence, 292 residues long: Small ribosomal subunit biogenesis GTPase RsgA (292 aa).

Residues 64 to 221 (RSELFRPAVA…LVDTPGFSSL (158 aa)) enclose the CP-type G domain. GTP-binding positions include 113 to 116 (NKMD) and 164 to 172 (GPSGVGKST). Zn(2+) is bound by residues Cys-245, Cys-250, His-252, and Cys-258.

The protein belongs to the TRAFAC class YlqF/YawG GTPase family. RsgA subfamily. Monomer. Associates with 30S ribosomal subunit, binds 16S rRNA. It depends on Zn(2+) as a cofactor.

It localises to the cytoplasm. Its function is as follows. One of several proteins that assist in the late maturation steps of the functional core of the 30S ribosomal subunit. Helps release RbfA from mature subunits. May play a role in the assembly of ribosomal proteins into the subunit. Circularly permuted GTPase that catalyzes slow GTP hydrolysis, GTPase activity is stimulated by the 30S ribosomal subunit. This chain is Small ribosomal subunit biogenesis GTPase RsgA, found in Clostridium botulinum (strain ATCC 19397 / Type A).